A 385-amino-acid polypeptide reads, in one-letter code: MSWQQRVDDALTARRATDTLRRRYVVSQGAGRWLVANGRQYLNFSSNDYLGLSQHPQIIRAWQQAATRFGVGSGGSGHISGYSVAHQALEEELAQWLGYPRALLFISGFAANQAVITALMKKNDRIVADRLSHASLLEAANLSPAQLRRFIHNDTQHLSRLLQSPCVGQQLVVTEGVYSMDGDSAPLAEIQHIARRHHAWLLVDDAHGIGVTGDEGRGTCWQRGVKPELLVVTFGKGFGVSGAAVLCSESVADYLLQFARHLVYSTSMPPAQAQALSASLAVIRSDEGRERREKLAALVQRFRAGVNASRFTLLNAHSAIQPLIVGDNSRALRLAEALRQQGCWATAIRPPTVPVGTARLRLTLTQAHEACDIDRLLEVLHGAGE.

Residue Arg-21 participates in substrate binding. 108–109 (GF) lines the pyridoxal 5'-phosphate pocket. His-133 provides a ligand contact to substrate. Ser-179, His-207, and Thr-233 together coordinate pyridoxal 5'-phosphate. An N6-(pyridoxal phosphate)lysine modification is found at Lys-236. Thr-352 provides a ligand contact to substrate.

Belongs to the class-II pyridoxal-phosphate-dependent aminotransferase family. BioF subfamily. Homodimer. It depends on pyridoxal 5'-phosphate as a cofactor.

It catalyses the reaction 6-carboxyhexanoyl-[ACP] + L-alanine + H(+) = (8S)-8-amino-7-oxononanoate + holo-[ACP] + CO2. It participates in cofactor biosynthesis; biotin biosynthesis. In terms of biological role, catalyzes the decarboxylative condensation of pimeloyl-[acyl-carrier protein] and L-alanine to produce 8-amino-7-oxononanoate (AON), [acyl-carrier protein], and carbon dioxide. In Salmonella enteritidis PT4 (strain P125109), this protein is 8-amino-7-oxononanoate synthase.